Consider the following 1018-residue polypeptide: MKNNLRYGIRKHKLGAASVFLGTMIVVGMGQDKEAAASEQKTTTVEENGNSATDNKTSETQTTATNVNHIEETQSYNATVTEQPSNATQVTTEEAPKAVQAPQTAQPANIETVKEEVVKEEAKPQVKETTQSQDNSGDQRQVDLTPKKATQNQVAETQVEVAQPRTASESKPRVTRSADVAEAKEASNAKVETGTDVTSKVTVEIGSIEGHNNTNKVEPHAGQRAVLKYKLKFENGLHQGDYFDFTLSNNVNTHGVSTARKVPEIKNGSVVMATGEVLEGGKIRYTFTNDIEDKVDVTAELEINLFIDPKTVQTNGNQTITSTLNEEQTSKELDVKYKDGIGNYYANLNGSIETFNKANNRFSHVAFIKPNNGKTTSVTVTGTLMKGSNQNGNQPKVRIFEYLGNNEDIAKSVYANTTDTSKFKEVTSNMSGNLNLQNNGSYSLNIENLDKTYVVHYDGEYLNGTDEVDFRTQMVGHPEQLYKYYYDRGYTLTWDNGLVLYSNKANGNEKNGPIIQNNKFEYKEDTIKETLTGQYDKNLVTTVEEEYDSSTLDIDYHTAIDGGGGYVDGYIETIEETDSSAIDIDYHTAVDSEAGHVGGYTESSEESNPIDFEESTHENSKHHADVVEYEEDTNPGGGQVTTESNLVEFDEESTKGIVTGAVSDHTTVEDTKEYTTESNLIELVDELPEEHGQAQGPVEEITKNNHHISHSGLGTENGHGNYDVIEEIEENSHVDIKSELGYEGGQNSGNQSFEEDTEEDKPKYEQGGNIVDIDFDSVPQIHGQNKGNQSFEEDTEKDKPKYEHGGNIIDIDFDSVPHIHGFNKHTEIIEEDTNKDKPSYQFGGHNSVDFEEDTLPKVSGQNEGQQTIEEDTTPPIVPPTPPTPEVPSEPETPTPPTPEVPSEPETPTPPTPEVPSEPETPTPPTPEVPAEPGKPVPPAKEEPKKPSKPVEQGKVVTPVIEINEKVKAVAPTKKPQSKKSELPETGGEESTNKGMLFGGLFSILGLALLRRNKKNHKA.

The first 36 residues, 1–36, serve as a signal peptide directing secretion; that stretch reads MKNNLRYGIRKHKLGAASVFLGTMIVVGMGQDKEAA. Positions 7 to 18 match the YSIRK-G/S signaling motif motif; the sequence is YGIRKHKLGAAS. The interval 37–511 is ligand-binding A region; it reads ASEQKTTTVE…SNKANGNEKN (475 aa). Disordered regions lie at residues 38–61 and 78–195; these read SEQKTTTVEENGNSATDNKTSETQ and ATVT…ETGT. Polar residues-rich tracts occupy residues 39–61 and 78–92; these read EQKTTTVEENGNSATDNKTSETQ and ATVTEQPSNATQVTT. Over residues 112–126 the composition is skewed to basic and acidic residues; it reads TVKEEVVKEEAKPQV. Polar residues predominate over residues 129–139; it reads TTQSQDNSGDQ. A fibrinogen/elastin/tropoelastin-binding region spans residues 194-511; sequence GTDVTSKVTV…SNKANGNEKN (318 aa). A fibronectin-binding region spans residues 512–872; it reads GPIIQNNKFE…EGQQTIEEDT (361 aa). A B-1 repeat occupies 545–574; the sequence is EEYDSSTLDIDYHTAIDGGGGYVDGYIETI. A 2 X approximate tandem repeats region spans residues 545-604; that stretch reads EEYDSSTLDIDYHTAIDGGGGYVDGYIETIEETDSSAIDIDYHTAVDSEAGHVGGYTESS. Residues 575–604 form a B-2 repeat; it reads EETDSSAIDIDYHTAVDSEAGHVGGYTESS. 3 disordered regions span residues 595–622, 740–813, and 827–997; these read GHVGGYTESSEESNPIDFEESTHENSKH, LGYE…DIDF, and EIIE…GMLF. The D-1 repeat unit spans residues 745–782; sequence GQNSGNQSFEEDTEEDKPKYEQGGNIVDIDFDSVPQIH. A 4 X approximate tandem repeats, D-3 repeat has more fibronectin-binding activity region spans residues 745–878; that stretch reads GQNSGNQSFE…EEDTTPPIVP (134 aa). Residues 783-820 form a D-2 repeat; it reads GQNKGNQSFEEDTEKDKPKYEHGGNIIDIDFDSVPHIH. One copy of the D-3 repeat lies at 821–859; that stretch reads GFNKHTEIIEEDTNKDKPSYQFGGHNSVDFEEDTLPKVS. Residues 827-838 are compositionally biased toward basic and acidic residues; that stretch reads EIIEEDTNKDKP. Residues 860-878 form a D-4; truncated repeat; sequence GQNEGQQTIEEDTTPPIVP. Pro residues predominate over residues 875–938; it reads PIVPPTPPTP…PAEPGKPVPP (64 aa). WR repeat units follow at residues 879–892, 893–906, 907–920, 921–934, and 935–948; these read PTPPTPEVPSEPET, PTPPTPEVPAEPGK, and PVPPAKEEPKKPSK. Positions 879–948 are 5 X tandem repeats, Pro-rich (WR); it reads PTPPTPEVPS…AKEEPKKPSK (70 aa). Residues 982-986 carry the LPXTG sorting signal motif; it reads LPETG. Position 985 is a pentaglycyl murein peptidoglycan amidated threonine (threonine 985). Residues 986–1018 constitute a propeptide, removed by sortase; sequence GGEESTNKGMLFGGLFSILGLALLRRNKKNHKA.

The protein resides in the secreted. Its subcellular location is the cell wall. Possesses multiple, substituting fibronectin (Fn) binding regions, each capable of conferring adherence to both soluble and immobilized forms of Fn. This confers to S.aureus the ability to invade endothelial cells both in vivo and in vitro, without requiring additional factors, although in a slow and inefficient way through actin rearrangements in host cells. This invasion process is mediated by integrin alpha-5/beta-1. Promotes bacterial attachment to both soluble and immobilized forms of fibrinogen (Fg) by means of a unique binding site localized within the 17 C-terminal residues of the gamma-chain of human Fg. Both plasma proteins (Fn and Fg) function as a bridge between bacterium and host cell. Promotes attachment to immobilized elastin peptides in a dose-dependent and saturable manner. Promotes attachment to both full-length and segments of immobilized human tropoelastin at multiple sites in a dose and pH-dependent manner. Promotes adherence to and aggregation of activated platelets independently of other S.aureus surface molecules. Is a critical mediator implicated in the induction of experimental endocarditis in rats with catheter-induced aortic vegetations, promoting both colonization and persistence of the bacterium into the host. The sequence is that of Fibronectin-binding protein A (fnbA) from Staphylococcus aureus (strain NCTC 8325 / PS 47).